Consider the following 167-residue polypeptide: Anaerobic nitrite reductase NSHB4 (167 aa).

Positions 12–162 (RFTEEQEALV…LVAAIKEGMK (151 aa)) constitute a Globin domain. The short motif at 45-49 (EVAPS) is the Homodimerization element. Ser-55, His-73, Arg-103, Thr-107, and His-108 together coordinate heme b. The Homodimerization signature appears at 115–127 (DTHFEVARFALLE).

It belongs to the plant globin family. Homodimer. Heme b serves as cofactor.

It is found in the cytoplasm. It localises to the nucleus. The enzyme catalyses Fe(III)-heme b-[protein] + nitric oxide + H2O = Fe(II)-heme b-[protein] + nitrite + 2 H(+). Functionally, phytoglobin that reduces nitrite to nitric oxide under anoxic conditions (e.g. during flooding or in waterlogged soil). May not function as an oxygen storage or transport protein. Has an unusually high affinity for O(2) through an hexacoordinate heme iron because of a very low dissociation constant. The sequence is that of Anaerobic nitrite reductase NSHB4 from Oryza sativa subsp. indica (Rice).